The primary structure comprises 212 residues: uncharacterized protein (212 aa).

The signal sequence occupies residues 1–18 (MIPLVALLVLLTLQASPG). Residues 186–208 (IYRLATFFMVSLFVGSFVALVFV) form a helical membrane-spanning segment.

It to A.fulgidus AF_0540.

It is found in the membrane. This is an uncharacterized protein from Archaeoglobus fulgidus (strain ATCC 49558 / DSM 4304 / JCM 9628 / NBRC 100126 / VC-16).